A 335-amino-acid chain; its full sequence is Matrix protein (335 aa).

Belongs to the morbillivirus/respirovirus/rubulavirus M protein family.

It is found in the virion. Functionally, the M protein has a crucial role in virus assembly and interacts with the RNP complex as well as with the viral membrane. The polypeptide is Matrix protein (M) (Phocine distemper virus (PDV)).